The sequence spans 458 residues: Phosphoglucosamine mutase (458 aa).

Serine 109 functions as the Phosphoserine intermediate in the catalytic mechanism. Mg(2+)-binding residues include serine 109, aspartate 251, aspartate 253, and aspartate 255. Phosphoserine is present on serine 109.

It belongs to the phosphohexose mutase family. Requires Mg(2+) as cofactor. In terms of processing, activated by phosphorylation.

The enzyme catalyses alpha-D-glucosamine 1-phosphate = D-glucosamine 6-phosphate. Functionally, catalyzes the conversion of glucosamine-6-phosphate to glucosamine-1-phosphate. The polypeptide is Phosphoglucosamine mutase (Myxococcus xanthus (strain DK1622)).